Consider the following 182-residue polypeptide: ATP-dependent protease subunit HslV (182 aa).

The active site involves T6. Positions 164, 167, and 170 each coordinate Na(+).

Belongs to the peptidase T1B family. HslV subfamily. As to quaternary structure, a double ring-shaped homohexamer of HslV is capped on each side by a ring-shaped HslU homohexamer. The assembly of the HslU/HslV complex is dependent on binding of ATP.

Its subcellular location is the cytoplasm. The enzyme catalyses ATP-dependent cleavage of peptide bonds with broad specificity.. Its activity is regulated as follows. Allosterically activated by HslU binding. In terms of biological role, protease subunit of a proteasome-like degradation complex believed to be a general protein degrading machinery. This chain is ATP-dependent protease subunit HslV, found in Borreliella burgdorferi (strain ATCC 35210 / DSM 4680 / CIP 102532 / B31) (Borrelia burgdorferi).